The chain runs to 70 residues: Beta-defensin 107 (70 aa).

The signal sequence occupies residues 1–26 (MPGAMKIFVFILAALILLAQIFQART). Cystine bridges form between Cys-41–Cys-55 and Cys-45–Cys-64.

This sequence belongs to the beta-defensin family. As to expression, specifically expressed in testis.

The protein localises to the secreted. Has antibacterial activity. This chain is Beta-defensin 107 (DEFB107A), found in Homo sapiens (Human).